Consider the following 283-residue polypeptide: MEMO1 family protein MK0963 (283 aa).

It belongs to the MEMO1 family.

The protein is MEMO1 family protein MK0963 of Methanopyrus kandleri (strain AV19 / DSM 6324 / JCM 9639 / NBRC 100938).